We begin with the raw amino-acid sequence, 63 residues long: Large ribosomal subunit protein bL32 (63 aa).

Over residues 1 to 18 the composition is skewed to basic residues; it reads MPVPKRKTSPSRRGKRRS. The interval 1–26 is disordered; that stretch reads MPVPKRKTSPSRRGKRRSHDGLRPEN.

Belongs to the bacterial ribosomal protein bL32 family.

The sequence is that of Large ribosomal subunit protein bL32 from Neorickettsia sennetsu (strain ATCC VR-367 / Miyayama) (Ehrlichia sennetsu).